Here is a 332-residue protein sequence, read N- to C-terminus: Endonuclease 8-like 2 (332 aa).

Catalysis depends on P2, which acts as the Schiff-base intermediate with DNA. Catalysis depends on E3, which acts as the Proton donor. Catalysis depends on K50, which acts as the Proton donor; for beta-elimination activity. The residue at position 50 (K50) is an N6-acetyllysine. Positions F56–D121 are disordered. The residue at position 68 (S68) is a Phosphoserine. The span at P74–A84 shows a compositional bias: basic and acidic residues. The span at G94–A105 shows a compositional bias: polar residues. K154 carries the post-translational modification N6-acetyllysine. N231 contributes to the DNA binding site. Residues Q284–P320 form an FPG-type zinc finger. The active-site Proton donor; for delta-elimination activity is the R310.

It belongs to the FPG family. Binds EP300.

Its subcellular location is the nucleus. It catalyses the reaction 2'-deoxyribonucleotide-(2'-deoxyribose 5'-phosphate)-2'-deoxyribonucleotide-DNA = a 3'-end 2'-deoxyribonucleotide-(2,3-dehydro-2,3-deoxyribose 5'-phosphate)-DNA + a 5'-end 5'-phospho-2'-deoxyribonucleoside-DNA + H(+). With respect to regulation, acetylation of Lys-50 leads to loss of DNA nicking activity. Its function is as follows. Involved in base excision repair of DNA damaged by oxidation or by mutagenic agents. Has DNA glycosylase activity towards 5-hydroxyuracil and other oxidized derivatives of cytosine with a preference for mismatched double-stranded DNA (DNA bubbles). Has low or no DNA glycosylase activity towards thymine glycol, 2-hydroxyadenine, hypoxanthine and 8-oxoguanine. Has AP (apurinic/apyrimidinic) lyase activity and introduces nicks in the DNA strand. Cleaves the DNA backbone by beta-delta elimination to generate a single-strand break at the site of the removed base with both 3'- and 5'-phosphates. In Pongo abelii (Sumatran orangutan), this protein is Endonuclease 8-like 2 (NEIL2).